Here is a 387-residue protein sequence, read N- to C-terminus: Formate-dependent phosphoribosylglycinamide formyltransferase (387 aa).

N(1)-(5-phospho-beta-D-ribosyl)glycinamide contacts are provided by residues 15-16 (EL) and Glu-75. Residues Arg-106, Lys-147, 152-157 (SSGKGQ), 187-190 (EEFI), and Glu-195 each bind ATP. The region spanning 111–301 (DLASNELNIR…EFELHLRAVL (191 aa)) is the ATP-grasp domain. Residues Glu-260 and Glu-272 each coordinate Mg(2+). N(1)-(5-phospho-beta-D-ribosyl)glycinamide contacts are provided by residues Asp-279, Lys-349, and 356-357 (RR).

Belongs to the PurK/PurT family. As to quaternary structure, homodimer.

It catalyses the reaction N(1)-(5-phospho-beta-D-ribosyl)glycinamide + formate + ATP = N(2)-formyl-N(1)-(5-phospho-beta-D-ribosyl)glycinamide + ADP + phosphate + H(+). Its pathway is purine metabolism; IMP biosynthesis via de novo pathway; N(2)-formyl-N(1)-(5-phospho-D-ribosyl)glycinamide from N(1)-(5-phospho-D-ribosyl)glycinamide (formate route): step 1/1. Its function is as follows. Involved in the de novo purine biosynthesis. Catalyzes the transfer of formate to 5-phospho-ribosyl-glycinamide (GAR), producing 5-phospho-ribosyl-N-formylglycinamide (FGAR). Formate is provided by PurU via hydrolysis of 10-formyl-tetrahydrofolate. The protein is Formate-dependent phosphoribosylglycinamide formyltransferase of Prochlorococcus marinus (strain NATL2A).